We begin with the raw amino-acid sequence, 251 residues long: Putative deaminase AgaI (251 aa).

The Proton acceptor; for enolization step role is filled by aspartate 86. Residue asparagine 154 is the For ring-opening step of the active site. Catalysis depends on histidine 156, which acts as the Proton acceptor; for ring-opening step. Glutamate 161 functions as the For ring-opening step in the catalytic mechanism.

The protein belongs to the glucosamine/galactosamine-6-phosphate isomerase family.

The sequence is that of Putative deaminase AgaI (agaI) from Escherichia coli (strain K12).